Here is a 385-residue protein sequence, read N- to C-terminus: GDP-D-glucose phosphorylase 1 (385 aa).

Residue His218 is the Tele-GMP-histidine intermediate of the active site.

This sequence belongs to the GDPGP1 family.

The protein resides in the cytoplasm. The catalysed reaction is GDP-alpha-D-glucose + phosphate = alpha-D-glucose 1-phosphate + GDP + H(+). In terms of biological role, specific and highly efficient GDP-D-glucose phosphorylase regulating the levels of GDP-D-glucose in cells. This is GDP-D-glucose phosphorylase 1 (GDPGP1) from Bos taurus (Bovine).